The chain runs to 289 residues: Acetyl-coenzyme A carboxylase carboxyl transferase subunit beta (289 aa).

The 262-residue stretch at 28-289 (VMTKCPKCKK…QGGEMAVWQS (262 aa)) folds into the CoA carboxyltransferase N-terminal domain. Residues Cys32, Cys35, Cys51, and Cys54 each coordinate Zn(2+). The C4-type zinc-finger motif lies at 32 to 54 (CPKCKKIMYTKEVLKNLKVCVNC).

Belongs to the AccD/PCCB family. As to quaternary structure, acetyl-CoA carboxylase is a heterohexamer composed of biotin carboxyl carrier protein (AccB), biotin carboxylase (AccC) and two subunits each of ACCase subunit alpha (AccA) and ACCase subunit beta (AccD). Zn(2+) serves as cofactor.

It is found in the cytoplasm. It catalyses the reaction N(6)-carboxybiotinyl-L-lysyl-[protein] + acetyl-CoA = N(6)-biotinyl-L-lysyl-[protein] + malonyl-CoA. It functions in the pathway lipid metabolism; malonyl-CoA biosynthesis; malonyl-CoA from acetyl-CoA: step 1/1. Component of the acetyl coenzyme A carboxylase (ACC) complex. Biotin carboxylase (BC) catalyzes the carboxylation of biotin on its carrier protein (BCCP) and then the CO(2) group is transferred by the transcarboxylase to acetyl-CoA to form malonyl-CoA. This Bacillus thuringiensis subsp. konkukian (strain 97-27) protein is Acetyl-coenzyme A carboxylase carboxyl transferase subunit beta.